Reading from the N-terminus, the 325-residue chain is Germination protease (325 aa).

A propeptide spanning residues Met1–Asp7 is cleaved from the precursor.

The protein belongs to the peptidase A25 family. Homotetramer. In terms of processing, autoproteolytically processed. The inactive tetrameric zymogen termed p46 autoprocesses to a smaller form termed p41, which is active only during spore germination.

The catalysed reaction is Endopeptidase action with P4 Glu or Asp, P1 preferably Glu &gt; Asp, P1' hydrophobic and P2' Ala.. Initiates the rapid degradation of small, acid-soluble proteins during spore germination. This chain is Germination protease, found in Clostridium perfringens (strain ATCC 13124 / DSM 756 / JCM 1290 / NCIMB 6125 / NCTC 8237 / Type A).